The following is a 207-amino-acid chain: Gene 66 protein (207 aa).

The sequence is that of Gene 66 protein (66) from Mycobacterium (Mycobacteriophage L5).